A 568-amino-acid polypeptide reads, in one-letter code: 2-succinyl-5-enolpyruvyl-6-hydroxy-3-cyclohexene-1-carboxylate synthase (568 aa).

It belongs to the TPP enzyme family. MenD subfamily. In terms of assembly, homodimer. The cofactor is Mg(2+). Requires Mn(2+) as cofactor. Thiamine diphosphate serves as cofactor.

The catalysed reaction is isochorismate + 2-oxoglutarate + H(+) = 5-enolpyruvoyl-6-hydroxy-2-succinyl-cyclohex-3-ene-1-carboxylate + CO2. It participates in quinol/quinone metabolism; 1,4-dihydroxy-2-naphthoate biosynthesis; 1,4-dihydroxy-2-naphthoate from chorismate: step 2/7. It functions in the pathway cofactor biosynthesis; phylloquinone biosynthesis. Functionally, catalyzes the thiamine diphosphate-dependent decarboxylation of 2-oxoglutarate and the subsequent addition of the resulting succinic semialdehyde-thiamine pyrophosphate anion to isochorismate to yield 2-succinyl-5-enolpyruvyl-6-hydroxy-3-cyclohexene-1-carboxylate (SEPHCHC). This Synechococcus sp. (strain CC9902) protein is 2-succinyl-5-enolpyruvyl-6-hydroxy-3-cyclohexene-1-carboxylate synthase.